Here is a 502-residue protein sequence, read N- to C-terminus: Type II secretion system protein E (502 aa).

An ATP-binding site is contributed by 263 to 270 (GPTGSGKT). Zn(2+) contacts are provided by Cys-396, Cys-399, Cys-429, and Cys-432. Positions 461 to 480 (SSEQEMTRHARTSGPSIRDD) are disordered.

The protein belongs to the GSP E family. Homodimer. Dimerization is directed by a relatively short domain near the extreme N-terminus and is essential for extracellular protein secretion. May form homooligomers. Interacts with XcpY/GspL. Forms an inner membrane platform subcomplex with XcpS/GspF, XcpY/GspL and XcpZ/GspM. The cofactor is Zn(2+).

It is found in the cell inner membrane. The enzyme catalyses ATP + H2O + cellular proteinSide 1 = ADP + phosphate + cellular proteinSide 2.. Functionally, ATPase component of the type II secretion system required for the energy-dependent secretion of extracellular factors such as proteases and toxins from the periplasm. Acts as a molecular motor to provide the energy that is required for assembly of the pseudopilus and the extrusion of substrates generated in the cytoplasm. This chain is Type II secretion system protein E (xcpR), found in Pseudomonas aeruginosa (strain ATCC 15692 / DSM 22644 / CIP 104116 / JCM 14847 / LMG 12228 / 1C / PRS 101 / PAO1).